Here is a 432-residue protein sequence, read N- to C-terminus: D-amino acid dehydrogenase (432 aa).

3-17 serves as a coordination point for FAD; it reads VVILGSGVVGVTSAW.

This sequence belongs to the DadA oxidoreductase family. It depends on FAD as a cofactor.

It catalyses the reaction a D-alpha-amino acid + A + H2O = a 2-oxocarboxylate + AH2 + NH4(+). The protein operates within amino-acid degradation; D-alanine degradation; NH(3) and pyruvate from D-alanine: step 1/1. Oxidative deamination of D-amino acids. In Escherichia fergusonii (strain ATCC 35469 / DSM 13698 / CCUG 18766 / IAM 14443 / JCM 21226 / LMG 7866 / NBRC 102419 / NCTC 12128 / CDC 0568-73), this protein is D-amino acid dehydrogenase.